Here is a 273-residue protein sequence, read N- to C-terminus: Type III pantothenate kinase (273 aa).

Position 5–12 (5–12 (DVGNSHVV)) interacts with ATP. 112-115 (GTDL) is a binding site for substrate. Asp-114 (proton acceptor) is an active-site residue. Asp-134 is a binding site for K(+). Thr-137 is a binding site for ATP. Thr-189 contributes to the substrate binding site.

This sequence belongs to the type III pantothenate kinase family. Homodimer. NH4(+) is required as a cofactor. K(+) serves as cofactor.

It is found in the cytoplasm. It carries out the reaction (R)-pantothenate + ATP = (R)-4'-phosphopantothenate + ADP + H(+). It participates in cofactor biosynthesis; coenzyme A biosynthesis; CoA from (R)-pantothenate: step 1/5. Its function is as follows. Catalyzes the phosphorylation of pantothenate (Pan), the first step in CoA biosynthesis. This Treponema pallidum (strain Nichols) protein is Type III pantothenate kinase.